The primary structure comprises 140 residues: Large ribosomal subunit protein bL17 (140 aa).

It belongs to the bacterial ribosomal protein bL17 family. As to quaternary structure, part of the 50S ribosomal subunit. Contacts protein L32.

This is Large ribosomal subunit protein bL17 from Rhizobium johnstonii (strain DSM 114642 / LMG 32736 / 3841) (Rhizobium leguminosarum bv. viciae).